The sequence spans 563 residues: Pyruvate decarboxylase isozyme 3 (563 aa).

Ser2 is subject to N-acetylserine. Positions 28 and 115 each coordinate pyruvate. A Glycyl lysine isopeptide (Lys-Gly) (interchain with G-Cter in ubiquitin) cross-link involves residue Lys212. The residue at position 223 (Ser223) is a Phosphoserine. Lys233 is covalently cross-linked (Glycyl lysine isopeptide (Lys-Gly) (interchain with G-Cter in ubiquitin)). Thr266 is subject to Phosphothreonine. Lys269 participates in a covalent cross-link: Glycyl lysine isopeptide (Lys-Gly) (interchain with G-Cter in ubiquitin). Thr353 carries the post-translational modification Phosphothreonine. Thiamine diphosphate-binding positions include Thr390 and 413–415; that span reads GSI. A Mg(2+)-binding site is contributed by Asp444. Thiamine diphosphate-binding positions include 445 to 446 and 471 to 476; these read GS and NDGYTI. Residues Asn471 and Gly473 each contribute to the Mg(2+) site. Glu477 is a pyruvate binding site. Residue Lys505 forms a Glycyl lysine isopeptide (Lys-Gly) (interchain with G-Cter in ubiquitin) linkage. A Phosphothreonine modification is found at Thr522.

Belongs to the TPP enzyme family. In terms of assembly, homotetramer. Mg(2+) serves as cofactor. The cofactor is thiamine diphosphate.

The protein localises to the cytoplasm. The catalysed reaction is pyruvate + H(+) = acetaldehyde + CO2. The enzyme catalyses 3-methyl-2-oxobutanoate + H(+) = 2-methylpropanal + CO2. It catalyses the reaction (S)-3-methyl-2-oxopentanoate + H(+) = 2-methylbutanal + CO2. It carries out the reaction indole-3-pyruvate + H(+) = indole-3-acetaldehyde + CO2. The catalysed reaction is 3-phenylpyruvate + H(+) = 2-phenylacetaldehyde + CO2. The enzyme catalyses 2-oxobutanoate + H(+) = propanal + CO2. It catalyses the reaction 2-oxopentanoate + H(+) = butanal + CO2. It carries out the reaction 2 acetaldehyde = acetoin. The catalysed reaction is acetaldehyde + pyruvate + H(+) = acetoin + CO2. It functions in the pathway fermentation; ethanol fermentation. It participates in amino-acid degradation; Ehrlich pathway. Its function is as follows. Minor of three pyruvate decarboxylases (PDC1, PDC5, PDC6) implicated in the nonoxidative conversion of pyruvate to acetaldehyde and carbon dioxide during alcoholic fermentation. Most of the produced acetaldehyde is subsequently reduced to ethanol, but some is required for cytosolic acetyl-CoA production for biosynthetic pathways. The enzyme is also one of five 2-oxo acid decarboxylases (PDC1, PDC5, PDC6, ARO10, and THI3) able to decarboxylate more complex 2-oxo acids (alpha-keto-acids) than pyruvate, which seem mainly involved in amino acid catabolism. Here the enzyme catalyzes the decarboxylation of amino acids, which, in a first step, have been transaminated to the corresponding 2-oxo acids. In a third step, the resulting aldehydes are reduced to alcohols, collectively referred to as fusel oils or alcohols. Its preferred substrates are the transaminated amino acids derived from threonine (2-oxobutanoate), norvaline (2-oxopentanoate), valine (3-methyl-2-oxobutanoate, also alpha-keto-isovalerate), isoleucine ((3S)-3-methyl-2-oxopentanoate, also alpha-keto-beta-methylvalerate), phenylalanine (phenylpyruvate), and tryptophan (3-(indol-3-yl)pyruvate), whereas transaminated leucine is no substrate. In a side-reaction the carbanionic intermediate (or active aldehyde) generated by decarboxylation or by activation of an aldehyde can react with an aldehyde via condensation (or carboligation) yielding a 2-hydroxy ketone, collectively called acyloins. The expression level of this protein in the presence of fermentable carbon sources is so low that it cannot compensate for the other two pyruvate decarboxylases to sustain fermentation. This Saccharomyces cerevisiae (strain ATCC 204508 / S288c) (Baker's yeast) protein is Pyruvate decarboxylase isozyme 3 (PDC6).